A 251-amino-acid chain; its full sequence is Isopentenyl-diphosphate delta-isomerase (251 aa).

Lysine 49 is a substrate binding site. Histidine 53 and histidine 66 together coordinate Mg(2+). One can recognise a Nudix hydrolase domain in the interval 64-212; the sequence is LLHRAFSVFL…SNSFTPWFKL (149 aa). Residues arginine 86 and lysine 90 each contribute to the substrate site. Cysteine 102 is an active-site residue. Serine 103 serves as a coordination point for substrate. Mg(2+) contacts are provided by glutamate 162 and glutamate 164. Glutamate 164 is a catalytic residue.

This sequence belongs to the IPP isomerase type 1 family. Requires Mg(2+) as cofactor.

The protein localises to the cytoplasm. It catalyses the reaction isopentenyl diphosphate = dimethylallyl diphosphate. It participates in isoprenoid biosynthesis; dimethylallyl diphosphate biosynthesis; dimethylallyl diphosphate from isopentenyl diphosphate: step 1/1. Its function is as follows. Isopentenyl-diphosphate delta-isomerase; part of the second module of ergosterol biosynthesis pathway that includes the middle steps of the pathway. The second module is carried out in the vacuole and involves the formation of farnesyl diphosphate, which is also an important intermediate in the biosynthesis of ubiquinone, dolichol, heme and prenylated proteins. Activity by the mevalonate kinase first converts mevalonate into 5-phosphomevalonate. 5-phosphomevalonate is then further converted to 5-diphosphomevalonate by the phosphomevalonate kinase. The diphosphomevalonate decarboxylase then produces isopentenyl diphosphate. The isopentenyl-diphosphate delta-isomerase then catalyzes the 1,3-allylic rearrangement of the homoallylic substrate isopentenyl (IPP) to its highly electrophilic allylic isomer, dimethylallyl diphosphate (DMAPP). Finally the farnesyl diphosphate synthase catalyzes the sequential condensation of isopentenyl pyrophosphate with dimethylallyl pyrophosphate, and then with the resultant geranylpyrophosphate to the ultimate product farnesyl pyrophosphate. The protein is Isopentenyl-diphosphate delta-isomerase of Phaffia rhodozyma (Yeast).